Here is a 263-residue protein sequence, read N- to C-terminus: Putative protein JayE (263 aa).

It belongs to the Mu gp47/PBSX XkdT family.

The sequence is that of Putative protein JayE (jayE) from Escherichia coli (strain K12).